The following is a 727-amino-acid chain: Putative E3 ubiquitin-protein ligase UNKL (727 aa).

The disordered stretch occupies residues 1–21 (MPSVSKAAAAALSGSPPQTEK). 4 consecutive C3H1-type zinc fingers follow at residues 75 to 104 (YSPD…HRTT), 115 to 145 (YYKT…HGPL), 243 to 277 (QYRS…HSRT), and 285 to 313 (IYKS…HTEK). Residues 330–339 (STSAYSSQPG) are compositionally biased toward polar residues. 3 disordered regions span residues 330-360 (STSA…DSKQ), 446-514 (LTGP…ATLG), and 543-562 (SPSP…SPNS). The span at 463 to 495 (SLPRSPSLHSSSSLSTSPLSSLSQSLSGPLVSS) shows a compositional bias: low complexity. The RING-type zinc-finger motif lies at 686-721 (CVACQERAHGTVLRPCQHRVLCEPCAASTPECPYCK).

Belongs to the unkempt family. As to quaternary structure, interacts with the GTP-bound form of Rac1. Interacts with Baf60b/Smarcd2. In terms of processing, ubiquitination is enhanced by activated Rac1. The presence of the RING finger domain is not essential for ubiquitination to occur. Ubiquitous.

It localises to the cytoplasm. The protein resides in the nucleus. It functions in the pathway protein modification; protein ubiquitination. Functionally, may participate in a protein complex showing an E3 ligase activity regulated by Rac1. Ubiquitination is directed towards itself and possibly other substrates, such as Baf60b/Smarcd2. Intrinsic E3 ligase activity has not been proven. The sequence is that of Putative E3 ubiquitin-protein ligase UNKL (Unkl) from Mus musculus (Mouse).